A 336-amino-acid polypeptide reads, in one-letter code: MKLAIIAGDGIGPEVTAEAVKVLDAVVPGVQKTSYDLGARRFHATGEVLPDSVVAELRNHDAILLGAIGDPSVPSGVLERGLLLRLRFELDHHINLRPARLYPGVASPLSGNPGIDFVVVREGTEGPYTGNGGAIRVGTPNEVATEVSVNTAFGVRRVVADAFERARRRRKHLTLVHKTNVLTFAGGLWLRTVDEVGECYPDVEVAYQHVDAATIHMITDPGRFDVIVTDNLFGDIITDLAAAVCGGIGLAASGNIDATRANPSMFEPVHGSAPDIAGQGIADPTAAIMSVALLLSHLGEHDAAARVDRAVEAHLATRGSERLATSDVGERIAAAL.

Positions 87, 97, 121, and 211 each coordinate substrate. Residues Asp-211, Asp-235, and Asp-239 each coordinate Mg(2+). 271-283 (GSAPDIAGQGIAD) provides a ligand contact to NAD(+).

It belongs to the isocitrate and isopropylmalate dehydrogenases family. LeuB type 2 subfamily. In terms of assembly, homodimer. It depends on Mg(2+) as a cofactor. Mn(2+) serves as cofactor.

The protein localises to the cytoplasm. The enzyme catalyses (2R,3S)-3-isopropylmalate + NAD(+) = 4-methyl-2-oxopentanoate + CO2 + NADH. It functions in the pathway amino-acid biosynthesis; L-leucine biosynthesis; L-leucine from 3-methyl-2-oxobutanoate: step 3/4. Functionally, catalyzes the oxidation of 3-carboxy-2-hydroxy-4-methylpentanoate (3-isopropylmalate) to 3-carboxy-4-methyl-2-oxopentanoate. The product decarboxylates to 4-methyl-2 oxopentanoate. This Mycobacterium tuberculosis (strain CDC 1551 / Oshkosh) protein is 3-isopropylmalate dehydrogenase (leuB).